We begin with the raw amino-acid sequence, 273 residues long: HLA class II histocompatibility antigen, DO beta chain (273 aa).

Residues 1 to 26 (MGSGWVPWVVALLVNLTRLDSSMTQG) form the signal peptide. Residues 27 to 120 (TDSPEDFVIQ…LGAPFTVGRK (94 aa)) are beta-1. Topologically, residues 27–224 (TDSPEDFVIQ…RAQSEYSWRK (198 aa)) are extracellular. Disulfide bonds link C41/C105 and C143/C199. Residue N45 is glycosylated (N-linked (GlcNAc...) asparagine). The interval 121–214 (VQPEVTVYPE…SLLSPVSVEW (94 aa)) is beta-2. Positions 123–213 (PEVTVYPERT…SSLLSPVSVE (91 aa)) constitute an Ig-like C1-type domain. Residues 215–224 (RAQSEYSWRK) form a connecting peptide region. A helical transmembrane segment spans residues 225-245 (MLSGIAAFLLGLIFLLVGIVI). Topologically, residues 246–273 (QLRAQKGYVRTQMSGNEVSRAVLLPQSC) are cytoplasmic.

This sequence belongs to the MHC class II family. As to quaternary structure, heterodimer of an alpha chain (DOA) and a beta chain (DOB). Forms a heterotetrameric complex with an HLA-DM molecule during intracellular transport in endosomal/lysosomal compartments in B-cells.

The protein resides in the endosome membrane. The protein localises to the lysosome membrane. In terms of biological role, important modulator in the HLA class II restricted antigen presentation pathway by interaction with the HLA-DM molecule in B-cells. Modifies peptide exchange activity of HLA-DM. The chain is HLA class II histocompatibility antigen, DO beta chain (HLA-DOB) from Homo sapiens (Human).